A 432-amino-acid chain; its full sequence is Putative D-alanyl-D-alanine carboxypeptidase (432 aa).

Residues 7-25 form a helical; Signal-anchor membrane-spanning segment; that stretch reads ATVLLTFSLSAFAVEYPVL.

The protein belongs to the peptidase S12 family. YfeW subfamily.

It localises to the cell inner membrane. It carries out the reaction Preferential cleavage: (Ac)2-L-Lys-D-Ala-|-D-Ala. Also transpeptidation of peptidyl-alanyl moieties that are N-acyl substituents of D-alanine.. The polypeptide is Putative D-alanyl-D-alanine carboxypeptidase (Salmonella choleraesuis (strain SC-B67)).